The chain runs to 388 residues: Serpin B11 (388 aa).

The segment at 338 to 362 is RCL; that stretch reads EEGTEAAAATGESISVKRLPVTVQF.

It belongs to the serpin family. Ov-serpin subfamily. As to expression, expressed in eye, lung, lymphocytes, thymus, stomach, uterus, heart, brain, liver, skeletal muscle, and in day 7, 15, and 17 embryos.

Its subcellular location is the cytoplasm. In terms of biological role, inhibitor of serine proteases. Has moderate inhibitory activity for trypsin-like peptidases, but also some activity with cysteine peptidases, cathepsin L, K, and V, and the serine peptidase, tryptase gamma. The polypeptide is Serpin B11 (Serpinb11) (Mus musculus (Mouse)).